A 227-amino-acid chain; its full sequence is Cytochrome c oxidase subunit 2 (227 aa).

The Mitochondrial intermembrane portion of the chain corresponds to 1–14 (MAYPLQLGFQDAVS). Residues 15–45 (PIMEELLYFHDHTLMIVFLISSLVLYIITLM) form a helical membrane-spanning segment. Residues 46-59 (LTTKLTHTNTMNAQ) are Mitochondrial matrix-facing. Residues 60–87 (EVETVWTILPAIILILIALPSLRILYMM) traverse the membrane as a helical segment. Residues 88 to 227 (DEINNPSLTV…TFEKWTASLL (140 aa)) are Mitochondrial intermembrane-facing. Cu cation is bound by residues histidine 161, cysteine 196, glutamate 198, cysteine 200, histidine 204, and methionine 207. Glutamate 198 is a binding site for Mg(2+).

It belongs to the cytochrome c oxidase subunit 2 family. In terms of assembly, component of the cytochrome c oxidase (complex IV, CIV), a multisubunit enzyme composed of 14 subunits. The complex is composed of a catalytic core of 3 subunits MT-CO1, MT-CO2 and MT-CO3, encoded in the mitochondrial DNA, and 11 supernumerary subunits COX4I, COX5A, COX5B, COX6A, COX6B, COX6C, COX7A, COX7B, COX7C, COX8 and NDUFA4, which are encoded in the nuclear genome. The complex exists as a monomer or a dimer and forms supercomplexes (SCs) in the inner mitochondrial membrane with NADH-ubiquinone oxidoreductase (complex I, CI) and ubiquinol-cytochrome c oxidoreductase (cytochrome b-c1 complex, complex III, CIII), resulting in different assemblies (supercomplex SCI(1)III(2)IV(1) and megacomplex MCI(2)III(2)IV(2)). Found in a complex with TMEM177, COA6, COX18, COX20, SCO1 and SCO2. Interacts with TMEM177 in a COX20-dependent manner. Interacts with COX20. Interacts with COX16. Cu cation is required as a cofactor.

The protein resides in the mitochondrion inner membrane. It carries out the reaction 4 Fe(II)-[cytochrome c] + O2 + 8 H(+)(in) = 4 Fe(III)-[cytochrome c] + 2 H2O + 4 H(+)(out). Its function is as follows. Component of the cytochrome c oxidase, the last enzyme in the mitochondrial electron transport chain which drives oxidative phosphorylation. The respiratory chain contains 3 multisubunit complexes succinate dehydrogenase (complex II, CII), ubiquinol-cytochrome c oxidoreductase (cytochrome b-c1 complex, complex III, CIII) and cytochrome c oxidase (complex IV, CIV), that cooperate to transfer electrons derived from NADH and succinate to molecular oxygen, creating an electrochemical gradient over the inner membrane that drives transmembrane transport and the ATP synthase. Cytochrome c oxidase is the component of the respiratory chain that catalyzes the reduction of oxygen to water. Electrons originating from reduced cytochrome c in the intermembrane space (IMS) are transferred via the dinuclear copper A center (CU(A)) of subunit 2 and heme A of subunit 1 to the active site in subunit 1, a binuclear center (BNC) formed by heme A3 and copper B (CU(B)). The BNC reduces molecular oxygen to 2 water molecules using 4 electrons from cytochrome c in the IMS and 4 protons from the mitochondrial matrix. The polypeptide is Cytochrome c oxidase subunit 2 (MT-CO2) (Hippopotamus amphibius (Hippopotamus)).